The chain runs to 776 residues: Endonuclease MutS2 (776 aa).

328–335 (GPNTGGKT) is a binding site for ATP. The Smr domain maps to 701–776 (LDLRGKRYEE…GSGATIVTFK (76 aa)).

The protein belongs to the DNA mismatch repair MutS family. MutS2 subfamily. In terms of assembly, homodimer. Binds to stalled ribosomes, contacting rRNA.

In terms of biological role, endonuclease that is involved in the suppression of homologous recombination and thus may have a key role in the control of bacterial genetic diversity. Acts as a ribosome collision sensor, splitting the ribosome into its 2 subunits. Detects stalled/collided 70S ribosomes which it binds and splits by an ATP-hydrolysis driven conformational change. Acts upstream of the ribosome quality control system (RQC), a ribosome-associated complex that mediates the extraction of incompletely synthesized nascent chains from stalled ribosomes and their subsequent degradation. Probably generates substrates for RQC. The polypeptide is Endonuclease MutS2 (Streptococcus mutans serotype c (strain ATCC 700610 / UA159)).